The chain runs to 246 residues: MADS-box transcription factor 14 (246 aa).

The MADS-box domain maps to 1 to 61 (MGRGKVQLKR…GKLYEYATDS (61 aa)). The 91-residue stretch at 88 to 178 (QGNWCHEYRK…QKELVEKQKV (91 aa)) folds into the K-box domain. The tract at residues 180–199 (KQQVQWDQTQPQTSSSSSSF) is disordered.

May interact with the K-box of MADS1 and MADS6. Highly expressed in sterile lemmas, at intermediate levels in stamens, and weakly in lemmas, paleas and carpels.

The protein localises to the nucleus. Probable transcription factor. May be involved in the control of flowering time. This is MADS-box transcription factor 14 (MADS14) from Oryza sativa subsp. japonica (Rice).